The sequence spans 260 residues: MNKVFNEFVYKISQDQIEKIEEYFFENNIKNYYFYETKEGTFLVLVFEEKQEKIFLPFNLEFVENRTTTSEDWVKNLITKPFEFIEGVYVDPDHNNVDGEIVIRITPGLAFGTGLHDTTKLSAKFLKKYLRPGMDVLDLGCGSAILSILAKKLGADRVLGVDNDPLAVEAAKENVERNNVDVEIRQSDLFSNVDGKFDLIVSNIIAEILIEALKDLPKFLKKDGVVILSGIIDSKLPLFKNYNIVEHWRSNEWNALVIKI.

Residues T119, G140, D162, and N203 each coordinate S-adenosyl-L-methionine.

This sequence belongs to the methyltransferase superfamily. PrmA family.

It localises to the cytoplasm. The enzyme catalyses L-lysyl-[protein] + 3 S-adenosyl-L-methionine = N(6),N(6),N(6)-trimethyl-L-lysyl-[protein] + 3 S-adenosyl-L-homocysteine + 3 H(+). Functionally, methylates ribosomal protein L11. This is Ribosomal protein L11 methyltransferase from Thermosipho africanus (strain TCF52B).